The sequence spans 467 residues: MDTKHFLPLDFSTQVNSSSLNSPTGRGSMAVPSLHPSLGPGIGSPLGSPGQLHSPISTLSSPINGMGPPFSVISSPMGPHSMSVPTTPTLGFGTGSPQLNSPMNPVSSTEDIKPPLGLNGVLKVPAHPSGNMASFTKHICAICGDRSSGKHYGVYSCEGCKGFFKRTVRKDLTYTCRDNKDCLIDKRQRNRCQYCRYQKCLAMGMKREAVQEERQRGKDRNENEVESTSSANEDMPVEKILEAELAVEPKTETYVEANMGLNPSSPNDPVTNICQAADKQLFTLVEWAKRIPHFSELPLDDQVILLRAGWNELLIASFSHRSIAVKDGILLATGLHVHRNSAHSAGVGAIFDRVLTELVSKMRDMQMDKTELGCLRAIVLFNPDSKGLSNPAEVEALREKVYASLEAYCKHKYPEQPGRFAKLLLRLPALRSIGLKCLEHLFFFKLIGDTPIDTFLMEMLEAPHQAT.

Positions 1 to 112 (MDTKHFLPLD…MNPVSSTEDI (112 aa)) are disordered. The modulating domain stretch occupies residues 1–139 (MDTKHFLPLD…GNMASFTKHI (139 aa)). Residue Lys4 forms a Glycyl lysine isopeptide (Lys-Gly) (interchain with G-Cter in SUMO2) linkage. Over residues 11-25 (FSTQVNSSSLNSPTG) the composition is skewed to polar residues. 2 positions are modified to phosphoserine: Ser22 and Ser28. Residues 32 to 52 (PSLHPSLGPGIGSPLGSPGQL) are compositionally biased toward low complexity. Over residues 54–63 (SPISTLSSPI) the composition is skewed to polar residues. A phosphoserine; by MAPK8 and MAPK9 mark is found at Ser61 and Ser75. The segment covering 83–109 (SVPTTPTLGFGTGSPQLNSPMNPVSST) has biased composition (polar residues). The residue at position 87 (Thr87) is a Phosphothreonine; by MAPK8 and MAPK9. Lys113 participates in a covalent cross-link: Glycyl lysine isopeptide (Lys-Gly) (interchain with G-Cter in SUMO). Ser134 carries the post-translational modification Phosphoserine. 2 residues coordinate Zn(2+): Cys140 and Cys143. The segment at 140 to 160 (CAICGDRSSGKHYGVYSCEGC) adopts an NR C4-type zinc-finger fold. The segment at residues 140-205 (CAICGDRSSG…RYQKCLAMGM (66 aa)) is a DNA-binding region (nuclear receptor). At Lys150 the chain carries N6-acetyllysine. Zn(2+) is bound by residues Cys157 and Cys160. Positions 165-170 (KRTVRK) are nuclear localization signal. Cys176, Cys182, Cys192, and Cys195 together coordinate Zn(2+). An NR C4-type zinc finger spans residues 176-200 (CRDNKDCLIDKRQRNRCQYCRYQKC). Residues 206-229 (KREAVQEERQRGKDRNENEVESTS) form a hinge region. Residues 211 to 223 (QEERQRGKDRNEN) are compositionally biased toward basic and acidic residues. Residues 211-233 (QEERQRGKDRNENEVESTSSANE) are disordered. The region spanning 232–463 (NEDMPVEKIL…TFLMEMLEAP (232 aa)) is the NR LBD domain. Ser264 carries the post-translational modification Phosphoserine. Ser265 is subject to Phosphoserine; by MAPK8 and MAPK9. Residues Arg321 and Ala332 each coordinate 9-cis-retinoate. Residues Arg321 and Ala332 each coordinate all-trans-retinoate. A required for nuclear export region spans residues 353 to 373 (RVLTELVSKMRDMQMDKTELG).

It belongs to the nuclear hormone receptor family. NR2 subfamily. As to quaternary structure, homodimer. Heterodimer with RARA; required for ligand-dependent retinoic acid receptor transcriptional activity. Heterodimer with PPARA (via the leucine-like zipper in the LBD); the interaction is required for PPARA transcriptional activity. Heterodimerizes with PPARG. Heterodimerizes (via NR LBD) with RARB. Heterodimerizes with NR1H4; the heterodimerization enhances the binding affinity for LXXLL motifs from coactivators. Interacts with coactivator NCO6. Interacts with coactivator NCO3. Interacts with coactivator FAM120B. Interacts with coactivator PELP1, SENP6, SFPQ, DNTTIP2 and RNF8. Interacts with PRMT2. Interacts with ASXL1. Interacts with BHLHE40/DEC1, BHLHE41/DEC2, NCOR1 and NCOR2. Interacts in a ligand-dependent fashion with MED1 and NCOA1. Interacts with VDR. Interacts with EP300; the interaction is decreased by 9-cis retinoic acid. Heterodimer (via C-terminus) with NR4A1 (via DNA-binding domain); the interaction is enhanced by 9-cis retinoic acid. NR4A1 competes with EP300 for interaction with RXRA and thereby attenuates EP300 mediated acetylation of RXRA. In the absence of hormonal ligand, interacts with TACC1. Interacts ith IGFBP3. Post-translationally, acetylated by EP300; acetylation enhances DNA binding and transcriptional activity. In terms of processing, phosphorylated on serine and threonine residues mainly in the N-terminal modulating domain. Constitutively phosphorylated on Ser-22 in the presence or absence of ligand. Under stress conditions, hyperphosphorylated by activated JNK on Ser-61, Ser-75, Thr-87 and Ser-265. Phosphorylated on Ser-28, in vitro, by PKA. This phosphorylation is required for repression of cAMP-mediated transcriptional activity of RARA. Ubiquitinated by UBR5, leading to its degradation: UBR5 specifically recognizes and binds ligand-bound RXRA when it is not associated with coactivators (NCOAs). In presence of NCOAs, the UBR5-degron is not accessible, preventing its ubiquitination and degradation. Post-translationally, sumoylation negatively regulates transcriptional activity. Desumoylated specifically by SENP6. Expressed in macrophages (at protein level).

The protein localises to the nucleus. It is found in the cytoplasm. The protein resides in the mitochondrion. Its function is as follows. Receptor for retinoic acid that acts as a transcription factor. Forms homo- or heterodimers with retinoic acid receptors (RARs) and binds to target response elements in response to their ligands, all-trans or 9-cis retinoic acid, to regulate gene expression in various biological processes. The RAR/RXR heterodimers bind to the retinoic acid response elements (RARE) composed of tandem 5'-AGGTCA-3' sites known as DR1-DR5 to regulate transcription. The high affinity ligand for retinoid X receptors (RXRs) is 9-cis retinoic acid. In the absence of ligand, the RXR-RAR heterodimers associate with a multiprotein complex containing transcription corepressors that induce histone deacetylation, chromatin condensation and transcriptional suppression. On ligand binding, the corepressors dissociate from the receptors and coactivators are recruited leading to transcriptional activation. Serves as a common heterodimeric partner for a number of nuclear receptors, such as RARA, RARB and PPARA. The RXRA/RARB heterodimer can act as a transcriptional repressor or transcriptional activator, depending on the RARE DNA element context. The RXRA/PPARA heterodimer is required for PPARA transcriptional activity on fatty acid oxidation genes such as ACOX1 and the P450 system genes. Together with RARA, positively regulates microRNA-10a expression, thereby inhibiting the GATA6/VCAM1 signaling response to pulsatile shear stress in vascular endothelial cells. Acts as an enhancer of RARA binding to RARE DNA element. May facilitate the nuclear import of heterodimerization partners such as VDR and NR4A1. Promotes myelin debris phagocytosis and remyelination by macrophages. Plays a role in the attenuation of the innate immune system in response to viral infections, possibly by negatively regulating the transcription of antiviral genes such as type I IFN genes. Involved in the regulation of calcium signaling by repressing ITPR2 gene expression, thereby controlling cellular senescence. In Mus musculus (Mouse), this protein is Retinoic acid receptor RXR-alpha (Rxra).